We begin with the raw amino-acid sequence, 479 residues long: Ribosomal RNA small subunit methyltransferase F (479 aa).

Residues 125–131 (AAAPGSK), Glu-149, Asp-176, and Asp-194 each bind S-adenosyl-L-methionine. The Nucleophile role is filled by Cys-247.

Belongs to the class I-like SAM-binding methyltransferase superfamily. RsmB/NOP family.

The protein localises to the cytoplasm. The catalysed reaction is cytidine(1407) in 16S rRNA + S-adenosyl-L-methionine = 5-methylcytidine(1407) in 16S rRNA + S-adenosyl-L-homocysteine + H(+). In terms of biological role, specifically methylates the cytosine at position 1407 (m5C1407) of 16S rRNA. The chain is Ribosomal RNA small subunit methyltransferase F from Escherichia coli O6:H1 (strain CFT073 / ATCC 700928 / UPEC).